We begin with the raw amino-acid sequence, 289 residues long: Segregation and condensation protein A (289 aa).

The span at 1 to 18 shows a compositional bias: basic and acidic residues; sequence MSEDRRSPTDEAPREGEL. The interval 1 to 24 is disordered; it reads MSEDRRSPTDEAPREGELPRSPGD.

It belongs to the ScpA family. In terms of assembly, component of the Structural Maintenance of Chromosome (SMC) condensin-like complex composed of ScpA, ScpB and the Smc homodimer. ScpA and ScpB bind to the head domain of Smc. The presence of the three proteins is required for the association of the complex with DNA.

The protein localises to the cytoplasm. Functionally, a conditionally essential component of the chromosome segregation machinery. Participates in chromosomal partition during cell division. Important for positioning of ParB-parS complexes (ori of replication) and of the ter replication site, as well as for segration of the ParB-parS complex and thus chromosome segregation. May act via the formation of a condensin-like complex containing Smc, ScpA and ScpB that pulls DNA away from mid-cell into both cell halves. This chain is Segregation and condensation protein A, found in Myxococcus xanthus (strain DK1622).